The chain runs to 472 residues: Proline--tRNA ligase (472 aa).

The protein belongs to the class-II aminoacyl-tRNA synthetase family. ProS type 3 subfamily. Homodimer.

Its subcellular location is the cytoplasm. The catalysed reaction is tRNA(Pro) + L-proline + ATP = L-prolyl-tRNA(Pro) + AMP + diphosphate. In terms of biological role, catalyzes the attachment of proline to tRNA(Pro) in a two-step reaction: proline is first activated by ATP to form Pro-AMP and then transferred to the acceptor end of tRNA(Pro). This Ureaplasma parvum serovar 3 (strain ATCC 27815 / 27 / NCTC 11736) protein is Proline--tRNA ligase.